Reading from the N-terminus, the 94-residue chain is Alpha-conotoxin Ms20.3 (94 aa).

The signal sequence occupies residues 1–24 (MPKLAVVLLVLLILPLSYFDAAGG). The propeptide occupies 25 to 45 (QVVQGDRRGNGLARYLQRGDR). At Glu-49 the chain carries 4-carboxyglutamate. The residue at position 55 (Pro-55) is a 4-hydroxyproline. Intrachain disulfides connect Cys-63/Cys-72, Cys-68/Cys-80, Cys-73/Cys-90, and Cys-78/Cys-92.

Belongs to the conotoxin D superfamily. Hetero-, homo- or pseudo-homodimer (identical sequence, different post-translational modifications). Homodimer of [carboxyGlu-49, hydroxyPro-55]Ms20.3, and heterodimer of [carboxyGlu-49, hydroxyPro-55]Ms20.3 and [carboxy'Glu-50', hydroxy'Pro-56']Ms20.5 may exist. In terms of tissue distribution, expressed by the venom duct.

Its subcellular location is the secreted. Alpha-D-conopeptides act on postsynaptic membranes, they bind to the nicotinic acetylcholine receptors (nAChR) and thus inhibit them. Through its two C-terminal domains, this homodimeric protein would bind to two nAChR allosteric sites, located outside the nAChR C-loop of the principal binding face and at the adjacent binding interface in a clockwise direction. This toxin specifically blocks mammalian neuronal nAChR of the alpha-7/CHRNA7 (IC(50)=0.12 nM), alpha-3-beta-2/CHRNA3-CHRNB2 (IC(50)=1.08 nM), and alpha-4-beta-2/CHRNA4-CHRNB2 (IC(50)=4.5 nM) subtypes. Has no effect on alpha-3-beta-4/CHRNA3-CHRNB4, alpha-4-beta-4/CHRNA4-CHRNB4 and alpha-1-beta-1-epsilon-delta/CHRNA1-CHRNB1-CHRNE-CHRND subtypes of nAChRs. This is Alpha-conotoxin Ms20.3 from Conus mustelinus (Weasel cone).